An 854-amino-acid polypeptide reads, in one-letter code: Disrupted in schizophrenia 1 protein (854 aa).

Positions 1 to 18 are enriched in gly residues; the sequence is MPGGGPQGAPAAAGGGGV. Disordered stretches follow at residues 1-24, 179-205, 221-257, and 278-323; these read MPGGGPQGAPAAAGGGGVSHRAGS, SAELSSNSCSPGCGPEVPPTPPGSHSA, GERGEAEGCPPSREAESHCQSPQEMGAKAASLDGPHE, and AQAA…SGDA. Residues 1-292 form an interaction with MAP1A region; sequence MPGGGPQGAP…NSSRPERDMH (292 aa). The Interaction with FBXW7 motif lies at 197 to 203; sequence PTPPGSH. Basic and acidic residues predominate over residues 285-295; the sequence is SRPERDMHSLP. The segment at 293 to 696 is interaction with TRAF3IP1; sequence SLPDMDPGSS…LGKVWEADLE (404 aa). Over residues 296–309 the composition is skewed to low complexity; sequence DMDPGSSSSLDPSL. 3 coiled-coil regions span residues 366 to 394, 452 to 505, and 602 to 666; these read ENDDYDKAETLQQRLEDLEQEKISLHFQL, ITRR…CDLT, and WTAK…SVKE. Lys372 is covalently cross-linked (Glycyl lysine isopeptide (Lys-Gly) (interchain with G-Cter in ubiquitin)). Residues 440–597 form a required for localization to punctate cytoplasmic foci region; that stretch reads LEPTAQDSLH…LLEAKMHAIS (158 aa). A necessary and sufficient for interaction with PCNT and localization at the centrosome region spans residues 446–854; it reads DSLHVSITRR…MTAGVHEAQA (409 aa). Residues 598–854 form an interaction with ATF4 and ATF5 region; sequence GNHFWTAKDL…MTAGVHEAQA (257 aa). Positions 716–739 are disordered; it reads VEDERQMDDLEGAAPPIPPRLHSE. The interval 727–854 is interaction with PAFAH1B1; it reads GAAPPIPPRL…MTAGVHEAQA (128 aa). Residues 802 to 830 adopt a coiled-coil conformation; that stretch reads SHDEDLIQSLRRELQMVKETLQAMILQLQ. The segment at 802–835 is interaction with NDEL1; it reads SHDEDLIQSLRRELQMVKETLQAMILQLQPAKEA.

As to quaternary structure, interacts with NDEL1. Interacts with CCDC88A (via C-terminus); the interaction is direct. Interacts with GSK3B. Interacts with tubulin alpha, ACTN2, ANKHD1, ATF4, ATF5, CEP63, EIF3S3, MAP1A, NDEL1, PAFAH1B1, RANBP9, SPTBN4, SYNE1 and TRAF3IP1. Interaction with microtubules may be mediated in part by TRAF3IP1. Interacts (via C-terminal) with PCNT. Interacts with CHCHD6. Interacts with CCDC141. Interacts with FBXW7, the substrate-recognition component of a SCF (SKP1-CUL1-F-box protein) E3 ubiquitin-protein ligase complex; the interaction targets DISC1 for proteasomal degradation. Interacts with ZNF365. Interacts with ATF4; inhibiting ATF4 transcription factor activity by disrupting ATF4 dimerization and DNA-binding. Interacts with PDE4B (isoform PDE4B5). Ubiquitinated. Ubiquitination with 'Lys-48'-linked polyubiquitin chains leads to its proteasomal degradation. Ubiquitous. Highly expressed in the dentate gyrus of the hippocampus. Also expressed in the temporal and parahippocampal cortices and cells of the white matter.

The protein resides in the cytoplasm. It is found in the cytoskeleton. Its subcellular location is the mitochondrion. It localises to the microtubule organizing center. The protein localises to the centrosome. The protein resides in the postsynaptic density. In terms of biological role, involved in the regulation of multiple aspects of embryonic and adult neurogenesis. Required for neural progenitor proliferation in the ventrical/subventrical zone during embryonic brain development and in the adult dentate gyrus of the hippocampus. Participates in the Wnt-mediated neural progenitor proliferation as a positive regulator by modulating GSK3B activity and CTNNB1 abundance. Plays a role as a modulator of the AKT-mTOR signaling pathway controlling the tempo of the process of newborn neurons integration during adult neurogenesis, including neuron positioning, dendritic development and synapse formation. Inhibits the activation of AKT-mTOR signaling upon interaction with CCDC88A. Regulates the migration of early-born granule cell precursors toward the dentate gyrus during the hippocampal development. Inhibits ATF4 transcription factor activity in neurons by disrupting ATF4 dimerization and DNA-binding. Plays a role, together with PCNT, in the microtubule network formation. The polypeptide is Disrupted in schizophrenia 1 protein (Homo sapiens (Human)).